The sequence spans 126 residues: MHAIMLKAKLHRAEVTHAVLDYEGSCAIDGDWLDLSGIREYEQIQIYNVDNGERFTTYAIRAENGSKMISVNGAAAHKAKVGDRVIICAYAHYSEAELASHKPRMLYMAPGNQLSHTSEAIPIQVA.

Ser-25 acts as the Schiff-base intermediate with substrate; via pyruvic acid in catalysis. Residue Ser-25 is modified to Pyruvic acid (Ser). Thr-57 contacts substrate. Tyr-58 functions as the Proton donor in the catalytic mechanism. Position 73–75 (73–75) interacts with substrate; it reads GAA.

The protein belongs to the PanD family. Heterooctamer of four alpha and four beta subunits. Pyruvate serves as cofactor. Post-translationally, is synthesized initially as an inactive proenzyme, which is activated by self-cleavage at a specific serine bond to produce a beta-subunit with a hydroxyl group at its C-terminus and an alpha-subunit with a pyruvoyl group at its N-terminus.

It is found in the cytoplasm. It carries out the reaction L-aspartate + H(+) = beta-alanine + CO2. The protein operates within cofactor biosynthesis; (R)-pantothenate biosynthesis; beta-alanine from L-aspartate: step 1/1. In terms of biological role, catalyzes the pyruvoyl-dependent decarboxylation of aspartate to produce beta-alanine. In Pseudomonas aeruginosa (strain LESB58), this protein is Aspartate 1-decarboxylase.